Consider the following 398-residue polypeptide: Riboflavin transporter RfnT (398 aa).

The next 12 helical transmembrane spans lie at 13–35 (ILTI…GGLV), 45–67 (LVTL…AAFF), 74–91 (RNAY…GVIA), 95–117 (IFAA…ASYV), 137–156 (ISWV…QLVI), 166–188 (MFAG…LFML), 220–242 (VAAG…IAMV), 252–274 (ALGI…KLIT), 281–300 (ITAL…LGGF), 305–324 (FWGA…IGAT), 345–367 (FIMF…SSGW), and 372–389 (WLVF…ILRL).

The protein belongs to the major facilitator superfamily.

Its subcellular location is the cell membrane. Functionally, transports riboflavin into the cell. The polypeptide is Riboflavin transporter RfnT (Brucella anthropi (strain ATCC 49188 / DSM 6882 / CCUG 24695 / JCM 21032 / LMG 3331 / NBRC 15819 / NCTC 12168 / Alc 37) (Ochrobactrum anthropi)).